Reading from the N-terminus, the 422-residue chain is La-related protein 6A (422 aa).

A disordered region spans residues 1 to 94; it reads MSSLPLRSGE…DHGENPVETD (94 aa). Residues 48–61 show a composition bias toward low complexity; it reads VTESSDDVVVNVSE. Residues 73–89 are compositionally biased toward basic and acidic residues; the sequence is DHERNSGEDRDQDHGEN. Residues 97 to 188 enclose the HTH La-type RNA-binding domain; the sequence is VVPIDELNQK…KRLSPLPEIR (92 aa). The 91-residue stretch at 193–283 folds into the RRM domain; sequence FTVLVENLPE…NGLRVKLLEQ (91 aa). The disordered stretch occupies residues 286-422; that stretch reads GKFAQRRPAR…PTSTQTSHEV (137 aa). Positions 295–348 are enriched in basic and acidic residues; sequence RREVDKEKDTTGRVHDQTGGEKNKKTREHQNHRLHHSDNPADDDGGNHQKDKNG.

It is found in the nucleus. Transcriptional regulator. This is La-related protein 6A (LARP6A) from Arabidopsis thaliana (Mouse-ear cress).